The following is a 195-amino-acid chain: 4'-phosphopantetheinyl transferase AcpT (195 aa).

The protein belongs to the P-Pant transferase superfamily. Gsp/Sfp/HetI/AcpT family.

The catalysed reaction is apo-[ACP] + CoA = holo-[ACP] + adenosine 3',5'-bisphosphate + H(+). Functionally, may be involved in an alternative pathway for phosphopantetheinyl transfer and holo-ACP synthesis in E.coli. The native apo-protein substrate is unknown. Is able to functionally replace AcpS in vivo but only when expressed at high levels. This chain is 4'-phosphopantetheinyl transferase AcpT, found in Escherichia coli (strain K12).